A 377-amino-acid polypeptide reads, in one-letter code: Protein-glutamate methylesterase/protein-glutamine glutaminase 1 (377 aa).

The Response regulatory domain occupies 4–121 (KVLVVDDSSF…ARNRDEAVTL (118 aa)). The residue at position 55 (Asp-55) is a 4-aspartylphosphate. Positions 138–170 (RPAAPRPAPTTSIAASSSLSQERAAATSPLGNR) are disordered. The span at 146 to 157 (PTTSIAASSSLS) shows a compositional bias: low complexity. One can recognise a CheB-type methylesterase domain in the interval 184 to 377 (SGKKYQLTAI…ERMLVEVGLA (194 aa)). Catalysis depends on residues Ser-196, His-223, and Asp-319.

The protein belongs to the CheB family. In terms of processing, phosphorylated by CheA. Phosphorylation of the N-terminal regulatory domain activates the methylesterase activity.

It is found in the cytoplasm. The enzyme catalyses [protein]-L-glutamate 5-O-methyl ester + H2O = L-glutamyl-[protein] + methanol + H(+). It carries out the reaction L-glutaminyl-[protein] + H2O = L-glutamyl-[protein] + NH4(+). Involved in chemotaxis. Part of a chemotaxis signal transduction system that modulates chemotaxis in response to various stimuli. Catalyzes the demethylation of specific methylglutamate residues introduced into the chemoreceptors (methyl-accepting chemotaxis proteins or MCP) by CheR. Also mediates the irreversible deamidation of specific glutamine residues to glutamic acid. This is Protein-glutamate methylesterase/protein-glutamine glutaminase 1 from Vibrio cholerae serotype O1 (strain ATCC 39315 / El Tor Inaba N16961).